A 526-amino-acid chain; its full sequence is ATP synthase subunit alpha (526 aa).

178–185 (GDRQTGKT) lines the ATP pocket.

The protein belongs to the ATPase alpha/beta chains family. In terms of assembly, F-type ATPases have 2 components, CF(1) - the catalytic core - and CF(0) - the membrane proton channel. CF(1) has five subunits: alpha(3), beta(3), gamma(1), delta(1), epsilon(1). CF(0) has four main subunits: a(1), b(1), b'(1) and c(9-12).

The protein localises to the cell membrane. It catalyses the reaction ATP + H2O + 4 H(+)(in) = ADP + phosphate + 5 H(+)(out). Functionally, produces ATP from ADP in the presence of a proton gradient across the membrane. The alpha chain is a regulatory subunit. The protein is ATP synthase subunit alpha of Roseiflexus castenholzii (strain DSM 13941 / HLO8).